The sequence spans 38 residues: 4 kDa defensin (38 aa).

Disulfide bonds link C4–C25, C11–C33, and C15–C35.

It belongs to the invertebrate defensin family. Type 2 subfamily.

Its subcellular location is the secreted. In terms of biological role, dual-function peptide with antimicrobial and potassium channel-blocking activities. Shows inhibitory activity against Gram-positive bacteria such as M.luteus, S.aureus, B.subtilis, and M.luteus as well as methicillin-resistant S.aureus (MIC=0.1-20 uM). Does not act on bacteria by disrupting membranes. Also moderately inhibits Kv1.1/KCNA1, Kv1.2/KCNA2, and Kv1.3/KCNA3 potassium channels. Inhibits potassium channels by interacting with the pore region. Does not show hemolytic activity. The protein is 4 kDa defensin of Leiurus hebraeus (Hebrew deathstalker scorpion).